A 157-amino-acid chain; its full sequence is MSRRHAAEKKVIPGDPVYGSVVLERFINKVMLHGKKSIARKIVYGALERFAKRLGLENPLEGFEEALENAKPILEVRSRRVGGATYQVPVEVAPDRRSCLAMQWIIKHARSKPGKCMEVGLANELIDCFNKQGATIKKREDTHRMAEANKAFAHYKW.

The protein belongs to the universal ribosomal protein uS7 family. Part of the 30S ribosomal subunit. Contacts proteins S9 and S11.

Its function is as follows. One of the primary rRNA binding proteins, it binds directly to 16S rRNA where it nucleates assembly of the head domain of the 30S subunit. Is located at the subunit interface close to the decoding center, probably blocks exit of the E-site tRNA. This Chlamydia trachomatis serovar L2 (strain ATCC VR-902B / DSM 19102 / 434/Bu) protein is Small ribosomal subunit protein uS7.